Consider the following 31-residue polypeptide: Nemertide alpha-2 (31 aa).

Cystine bridges form between Cys2/Cys16, Cys9/Cys20, and Cys15/Cys26. 4-hydroxyproline occurs at positions 28 and 29.

This sequence belongs to the nemertide family. In terms of tissue distribution, confined to the epidermis and to the mucus layer.

The protein resides in the secreted. Its function is as follows. Toxin with similar potency against both insect and mammalian sodium channels (Nav). Delays the inactivation of most Nav channels tested (B.germanica (BgNav1); EC(50)=87.2 nM, human Nav1.1/SCN1A; EC(50)=125.8 nM, rat Nav1.2/SCN2A; EC(50)=97.9 nM, rat Nav1.3/SCN3A; EC(50)=127.7 nM, rat Nav1.4/SCN4A; EC(50)=1150.3 nM, human Nav1.5/SCN5A; EC(50)=149.2 nM, mouse Nav1.6/SCN8A; EC(50)=1361.8 nM, human Nav1.9/SCN9A; EC(50)=1296.7 nM). Inactivation is completely prevented by a concentration of 1 uM, resulting in sustained, non-inactivating current. In addition, the toxin significantly enhances the recovery from inactivation, and the open state is not required for the toxin to interact with the channel. In vivo, injection into brine shrimp (Artemia salina) stops movement or causes death after 24 hours (EC(50)=2.9 uM). This chain is Nemertide alpha-2, found in Lineus longissimus (Bootlace worm).